Reading from the N-terminus, the 52-residue chain is ATP synthase protein 8 (52 aa).

The chain crosses the membrane as a helical span at residues 7–27; the sequence is MKWFLIYFIYLLIFYLFIMLI.

Belongs to the ATPase protein 8 family. In terms of assembly, F-type ATPases have 2 components, CF(1) - the catalytic core - and CF(0) - the membrane proton channel.

The protein resides in the mitochondrion membrane. In terms of biological role, mitochondrial membrane ATP synthase (F(1)F(0) ATP synthase or Complex V) produces ATP from ADP in the presence of a proton gradient across the membrane which is generated by electron transport complexes of the respiratory chain. F-type ATPases consist of two structural domains, F(1) - containing the extramembraneous catalytic core and F(0) - containing the membrane proton channel, linked together by a central stalk and a peripheral stalk. During catalysis, ATP synthesis in the catalytic domain of F(1) is coupled via a rotary mechanism of the central stalk subunits to proton translocation. Part of the complex F(0) domain. Minor subunit located with subunit a in the membrane. This Apis mellifera ligustica (Common honeybee) protein is ATP synthase protein 8 (mt:ATPase8).